Here is a 183-residue protein sequence, read N- to C-terminus: Adenine phosphoribosyltransferase (183 aa).

Belongs to the purine/pyrimidine phosphoribosyltransferase family. In terms of assembly, homodimer.

Its subcellular location is the cytoplasm. It carries out the reaction AMP + diphosphate = 5-phospho-alpha-D-ribose 1-diphosphate + adenine. It functions in the pathway purine metabolism; AMP biosynthesis via salvage pathway; AMP from adenine: step 1/1. Functionally, catalyzes a salvage reaction resulting in the formation of AMP, that is energically less costly than de novo synthesis. This is Adenine phosphoribosyltransferase from Shewanella piezotolerans (strain WP3 / JCM 13877).